A 360-amino-acid chain; its full sequence is MKKYLALALIAPLLVSCSSSNKKGAEYNEAWVKDTNGFDILMGQFAHNIENIWGYNEVLLAGPKDYVKYTDQYQTRSHINFDEGTITVETIAGTDPRGRLRQAIVKTLLMGDDPNSIDLYSDVDDIQISKEPFLYGQVVDNTGASIRWEWRAARFADYLLQTRLKSRNNGLRVVYSITINLVPNHLDKRAHKYLGMVRQASRKYGVDESLILAIMQTESSFNPYAVSHADAMGLMQVVQHSAGRDVFRSQGKSGLPSRSYLFDPANNIDTGTAYLAMLNNVYLAGIDNPTSRRYAVITAYNGGAGSVLRVFSSDKVQAANIINSMAPGDVYQTLTTRHPSAESRRYLYKVNTAQKSYRRK.

The first 16 residues, 1-16 (MKKYLALALIAPLLVS), serve as a signal peptide directing secretion. The N-palmitoyl cysteine moiety is linked to residue Cys17. Residue Cys17 is the site of S-diacylglycerol cysteine attachment.

The protein belongs to the transglycosylase Slt family.

It is found in the cell outer membrane. It catalyses the reaction Exolytic cleavage of the (1-&gt;4)-beta-glycosidic linkage between N-acetylmuramic acid (MurNAc) and N-acetylglucosamine (GlcNAc) residues in peptidoglycan, from either the reducing or the non-reducing ends of the peptidoglycan chains, with concomitant formation of a 1,6-anhydrobond in the MurNAc residue.. In terms of biological role, murein-degrading enzyme. May play a role in recycling of muropeptides during cell elongation and/or cell division. The polypeptide is Membrane-bound lytic murein transglycosylase C (Klebsiella pneumoniae subsp. pneumoniae (strain ATCC 700721 / MGH 78578)).